Consider the following 429-residue polypeptide: UDP-N-acetylglucosamine 1-carboxyvinyltransferase (429 aa).

22-23 is a phosphoenolpyruvate binding site; the sequence is KN. Arginine 102 provides a ligand contact to UDP-N-acetyl-alpha-D-glucosamine. Catalysis depends on cysteine 126, which acts as the Proton donor. Residue cysteine 126 is modified to 2-(S-cysteinyl)pyruvic acid O-phosphothioketal. Residues 131–135, aspartate 316, and isoleucine 338 contribute to the UDP-N-acetyl-alpha-D-glucosamine site; that span reads RPVDL.

Belongs to the EPSP synthase family. MurA subfamily.

The protein resides in the cytoplasm. It carries out the reaction phosphoenolpyruvate + UDP-N-acetyl-alpha-D-glucosamine = UDP-N-acetyl-3-O-(1-carboxyvinyl)-alpha-D-glucosamine + phosphate. It functions in the pathway cell wall biogenesis; peptidoglycan biosynthesis. Functionally, cell wall formation. Adds enolpyruvyl to UDP-N-acetylglucosamine. In Methylobacterium nodulans (strain LMG 21967 / CNCM I-2342 / ORS 2060), this protein is UDP-N-acetylglucosamine 1-carboxyvinyltransferase.